Here is a 249-residue protein sequence, read N- to C-terminus: Isoprenyl transferase (249 aa).

Residue Asp25 is part of the active site. Residue Asp25 participates in Mg(2+) binding. Substrate is bound by residues 26–29, Trp30, Arg38, His42, and 70–72; these read GNGR and STE. Asn73 acts as the Proton acceptor in catalysis. Residues Trp74, Arg76, Arg197, and 203-205 contribute to the substrate site; that span reads RLS. Residue Glu216 coordinates Mg(2+).

It belongs to the UPP synthase family. In terms of assembly, homodimer. Mg(2+) serves as cofactor.

Its function is as follows. Catalyzes the condensation of isopentenyl diphosphate (IPP) with allylic pyrophosphates generating different type of terpenoids. The protein is Isoprenyl transferase of Streptococcus pyogenes serotype M6 (strain ATCC BAA-946 / MGAS10394).